Here is a 295-residue protein sequence, read N- to C-terminus: Ribosomal protein L11 methyltransferase (295 aa).

Residues Thr150, Gly171, Asp193, and Asn232 each coordinate S-adenosyl-L-methionine.

Belongs to the methyltransferase superfamily. PrmA family.

It is found in the cytoplasm. It carries out the reaction L-lysyl-[protein] + 3 S-adenosyl-L-methionine = N(6),N(6),N(6)-trimethyl-L-lysyl-[protein] + 3 S-adenosyl-L-homocysteine + 3 H(+). In terms of biological role, methylates ribosomal protein L11. This is Ribosomal protein L11 methyltransferase from Neisseria meningitidis serogroup A / serotype 4A (strain DSM 15465 / Z2491).